A 171-amino-acid polypeptide reads, in one-letter code: Disulfide bond formation protein B (171 aa).

Residues 1–8 are Cytoplasmic-facing; it reads MRLSYRLV. The chain crosses the membrane as a helical span at residues 9–25; it reads SGLLVLASIVGMSFALY. Residues 26–43 lie on the Periplasmic side of the membrane; sequence LEHVKGLEPCPLCIFQRV. Cysteines 35 and 38 form a disulfide. The helical transmembrane segment at 44 to 60 threads the bilayer; sequence GLMAMGFVALIAFLHNP. Topologically, residues 61-67 are cytoplasmic; the sequence is VSNAIKR. Residues 68–85 traverse the membrane as a helical segment; it reads FYAFLAGVAILWSVGVAG. Residues 86-142 lie on the Periplasmic side of the membrane; that stretch reads RHVWLQHLPPDQVPSCGPGLNYLIDALPMKTVLQEVLSGSGECAAIDWTFLGQSLPV. The cysteines at positions 101 and 128 are disulfide-linked. Residues 143-161 traverse the membrane as a helical segment; the sequence is WSLAYFLLLLLVCLWQLFR. At 162–171 the chain is on the cytoplasmic side; sequence FYPVFKTAKK.

This sequence belongs to the DsbB family.

The protein resides in the cell inner membrane. Functionally, required for disulfide bond formation in some periplasmic proteins. Acts by oxidizing the DsbA protein. This Acinetobacter baumannii (strain ATCC 17978 / DSM 105126 / CIP 53.77 / LMG 1025 / NCDC KC755 / 5377) protein is Disulfide bond formation protein B.